Consider the following 337-residue polypeptide: Holliday junction branch migration complex subunit RuvB (337 aa).

Residues 1–180 (MTRLISADKS…FGVISRLEFY (180 aa)) form a large ATPase domain (RuvB-L) region. ATP-binding positions include L19, R20, G61, K64, T65, T66, 127 to 129 (EDF), R170, Y180, and R217. Residue T65 participates in Mg(2+) binding. The interval 181–251 (THDELAFIIT…VADQALALLE (71 aa)) is small ATPAse domain (RuvB-S). The segment at 254-337 (EMGFDMMDRA…APEPPQGKLF (84 aa)) is head domain (RuvB-H). DNA contacts are provided by R309 and R314.

The protein belongs to the RuvB family. As to quaternary structure, homohexamer. Forms an RuvA(8)-RuvB(12)-Holliday junction (HJ) complex. HJ DNA is sandwiched between 2 RuvA tetramers; dsDNA enters through RuvA and exits via RuvB. An RuvB hexamer assembles on each DNA strand where it exits the tetramer. Each RuvB hexamer is contacted by two RuvA subunits (via domain III) on 2 adjacent RuvB subunits; this complex drives branch migration. In the full resolvosome a probable DNA-RuvA(4)-RuvB(12)-RuvC(2) complex forms which resolves the HJ.

It is found in the cytoplasm. The catalysed reaction is ATP + H2O = ADP + phosphate + H(+). In terms of biological role, the RuvA-RuvB-RuvC complex processes Holliday junction (HJ) DNA during genetic recombination and DNA repair, while the RuvA-RuvB complex plays an important role in the rescue of blocked DNA replication forks via replication fork reversal (RFR). RuvA specifically binds to HJ cruciform DNA, conferring on it an open structure. The RuvB hexamer acts as an ATP-dependent pump, pulling dsDNA into and through the RuvAB complex. RuvB forms 2 homohexamers on either side of HJ DNA bound by 1 or 2 RuvA tetramers; 4 subunits per hexamer contact DNA at a time. Coordinated motions by a converter formed by DNA-disengaged RuvB subunits stimulates ATP hydrolysis and nucleotide exchange. Immobilization of the converter enables RuvB to convert the ATP-contained energy into a lever motion, pulling 2 nucleotides of DNA out of the RuvA tetramer per ATP hydrolyzed, thus driving DNA branch migration. The RuvB motors rotate together with the DNA substrate, which together with the progressing nucleotide cycle form the mechanistic basis for DNA recombination by continuous HJ branch migration. Branch migration allows RuvC to scan DNA until it finds its consensus sequence, where it cleaves and resolves cruciform DNA. The chain is Holliday junction branch migration complex subunit RuvB from Geobacter sp. (strain M21).